Reading from the N-terminus, the 493-residue chain is Glutamyl-tRNA(Gln) amidotransferase subunit A (493 aa).

Residues K78 and S158 each act as charge relay system in the active site. Catalysis depends on S182, which acts as the Acyl-ester intermediate.

It belongs to the amidase family. GatA subfamily. As to quaternary structure, heterotrimer of A, B and C subunits.

It catalyses the reaction L-glutamyl-tRNA(Gln) + L-glutamine + ATP + H2O = L-glutaminyl-tRNA(Gln) + L-glutamate + ADP + phosphate + H(+). In terms of biological role, allows the formation of correctly charged Gln-tRNA(Gln) through the transamidation of misacylated Glu-tRNA(Gln) in organisms which lack glutaminyl-tRNA synthetase. The reaction takes place in the presence of glutamine and ATP through an activated gamma-phospho-Glu-tRNA(Gln). This chain is Glutamyl-tRNA(Gln) amidotransferase subunit A, found in Rickettsia canadensis (strain McKiel).